Consider the following 361-residue polypeptide: Phosphoserine aminotransferase (361 aa).

Arginine 42 contributes to the L-glutamate binding site. Residues 76-77, tryptophan 102, threonine 153, aspartate 173, and glutamine 196 each bind pyridoxal 5'-phosphate; that span reads AR. Lysine 197 is modified (N6-(pyridoxal phosphate)lysine). 238-239 is a pyridoxal 5'-phosphate binding site; it reads NT.

This sequence belongs to the class-V pyridoxal-phosphate-dependent aminotransferase family. SerC subfamily. In terms of assembly, homodimer. Requires pyridoxal 5'-phosphate as cofactor.

The protein resides in the cytoplasm. It carries out the reaction O-phospho-L-serine + 2-oxoglutarate = 3-phosphooxypyruvate + L-glutamate. It catalyses the reaction 4-(phosphooxy)-L-threonine + 2-oxoglutarate = (R)-3-hydroxy-2-oxo-4-phosphooxybutanoate + L-glutamate. The protein operates within amino-acid biosynthesis; L-serine biosynthesis; L-serine from 3-phospho-D-glycerate: step 2/3. It participates in cofactor biosynthesis; pyridoxine 5'-phosphate biosynthesis; pyridoxine 5'-phosphate from D-erythrose 4-phosphate: step 3/5. In terms of biological role, catalyzes the reversible conversion of 3-phosphohydroxypyruvate to phosphoserine and of 3-hydroxy-2-oxo-4-phosphonooxybutanoate to phosphohydroxythreonine. The polypeptide is Phosphoserine aminotransferase (Pectobacterium atrosepticum (strain SCRI 1043 / ATCC BAA-672) (Erwinia carotovora subsp. atroseptica)).